Reading from the N-terminus, the 204-residue chain is Holliday junction branch migration complex subunit RuvA (204 aa).

The segment at 1–63 (MIGKLSGKVD…EEHIHLYGFL (63 aa)) is domain I. A domain II region spans residues 64-142 (TLEEKIFFNL…KISSGSAIIK (79 aa)). The interval 143 to 149 (ESLNIKN) is flexible linker. The segment at 150-204 (ITPVASNEVIKALVNLGFSRFEAQNAVQGIITQNPEISIDELIKTALKNRNSNFS) is domain III.

This sequence belongs to the RuvA family. Homotetramer. Forms an RuvA(8)-RuvB(12)-Holliday junction (HJ) complex. HJ DNA is sandwiched between 2 RuvA tetramers; dsDNA enters through RuvA and exits via RuvB. An RuvB hexamer assembles on each DNA strand where it exits the tetramer. Each RuvB hexamer is contacted by two RuvA subunits (via domain III) on 2 adjacent RuvB subunits; this complex drives branch migration. In the full resolvosome a probable DNA-RuvA(4)-RuvB(12)-RuvC(2) complex forms which resolves the HJ.

It localises to the cytoplasm. The RuvA-RuvB-RuvC complex processes Holliday junction (HJ) DNA during genetic recombination and DNA repair, while the RuvA-RuvB complex plays an important role in the rescue of blocked DNA replication forks via replication fork reversal (RFR). RuvA specifically binds to HJ cruciform DNA, conferring on it an open structure. The RuvB hexamer acts as an ATP-dependent pump, pulling dsDNA into and through the RuvAB complex. HJ branch migration allows RuvC to scan DNA until it finds its consensus sequence, where it cleaves and resolves the cruciform DNA. The chain is Holliday junction branch migration complex subunit RuvA from Rickettsia rickettsii (strain Iowa).